The following is a 511-amino-acid chain: MVEQIMIQGTASDAGKSVIVAGLCRLFKNKGKRVVPFKSQNMSLNSFITATGDEMGRAQVFQAEAAGVFPDVRMNPVLLKPTNDRQSQVIFMGAILDNMDAVSYHDFKQTLIPKIQAVYQSLADENDIIVLEGAGSPAEINLNDRDIVNMGMAKMVDAPVVLVADIDKGGVFASIYGTIMLLKEEERARLKGVIINKFRGDVALLQPGIEMIEELTNVPVIGVIPYANLQLEEEDSVSLSGKNYVLDSSALLDIAIICLPRISNFTDFHILEIQPDISVRYIRNLADFGNPDLVIIPGSKNTLEDMAFLEQSGLKKAIQNYAENAGKVIGICGGYQMLGKRMLDPNQVESEKVEIAGLGLLDTETIFLDQKRTTQITGVTFSSEPVEGYEIHMGQTKRGENTQPFCKIKAVNGNQETHEDGAISANKNIIGTYIHGIFDNDIFLGNLFNELLTQKNKSIYPHEIIKLKEHKETEYDKLAALLEANIQMDQLEKIMKGEKICVSTQKPAIKE.

Positions 251–443 constitute a GATase cobBQ-type domain; that stretch reads LLDIAIICLP…IHGIFDNDIF (193 aa). Cys332 (nucleophile) is an active-site residue. The active site involves His435.

This sequence belongs to the CobB/CobQ family. CobQ subfamily.

It participates in cofactor biosynthesis; adenosylcobalamin biosynthesis. Catalyzes amidations at positions B, D, E, and G on adenosylcobyrinic A,C-diamide. NH(2) groups are provided by glutamine, and one molecule of ATP is hydrogenolyzed for each amidation. The chain is Cobyric acid synthase from Listeria innocua serovar 6a (strain ATCC BAA-680 / CLIP 11262).